A 580-amino-acid chain; its full sequence is Thymidine kinase (580 aa).

Disordered regions lie at residues 1-60 and 133-157; these read MAEG…KSVK and VCGR…ASMG. Pro residues predominate over residues 137 to 149; sequence PPLPPPNHPPPAT. 260–267 serves as a coordination point for ATP; it reads GVMGVGKS. E287 (proton acceptor) is an active-site residue. Q325 lines the substrate pocket. Residue R415 coordinates ATP. Position 421 (R421) interacts with substrate.

The protein belongs to the herpesviridae thymidine kinase family. In terms of assembly, homodimer.

The catalysed reaction is thymidine + ATP = dTMP + ADP + H(+). Functionally, catalyzes the transfer of the gamma-phospho group of ATP to thymidine to generate dTMP in the salvage pathway of pyrimidine synthesis. The dTMP serves as a substrate for DNA polymerase during viral DNA replication. Allows the virus to be reactivated and to grow in non-proliferative cells lacking a high concentration of phosphorylated nucleic acid precursors. The chain is Thymidine kinase from Human herpesvirus 8 type P (isolate GK18) (HHV-8).